The primary structure comprises 411 residues: Protein translocase subunit SecY (411 aa).

The next 10 helical transmembrane spans lie at 11–31, 52–72, 111–131, 135–155, 163–180, 197–217, 253–273, 291–311, 349–369, and 377–397; these read IIFTLFLLVLARLGIFIPVPG, IFSGGGFSTIGIFALGIVPYI, ALGWATLQSGAISIWVKPYVF, FAFVCESVLALTAGSMIIMWL, GIGNGASLLIFQNIVSGL, SLKFGLFIAIFLLMIIITICV, VMPIVFASASMALPSYLTQII, LYLLLYCALILFFSYFYTSIV, TFLGASFLFTVALIPFIIEKV, and GLGATSLLILVGVAIDTAKQI.

This sequence belongs to the SecY/SEC61-alpha family. As to quaternary structure, component of the plastid Sec protein translocase complex, which is composed of at least SecY, SecE and SecG.

Its subcellular location is the plastid. The protein localises to the chloroplast thylakoid membrane. Functionally, the central subunit of the protein translocation channel SecYE. Consists of two halves formed by TMs 1-5 and 6-10. These two domains form a lateral gate at the front which open onto the bilayer between TMs 2 and 7, and are clamped together by SecE at the back. The channel is closed by both a pore ring composed of hydrophobic SecY resides and a short helix (helix 2A) on the extracellular side of the membrane which forms a plug. The chain is Protein translocase subunit SecY from Pyropia yezoensis (Susabi-nori).